The chain runs to 96 residues: UPF0235 protein CAB243 (96 aa).

Belongs to the UPF0235 family.

The polypeptide is UPF0235 protein CAB243 (Chlamydia abortus (strain DSM 27085 / S26/3) (Chlamydophila abortus)).